Reading from the N-terminus, the 245-residue chain is Protein mlo1 (245 aa).

Residues 4 to 38 (YKSLKVAELREKLAEKGLSTAGNKAELVSRLTAAT) enclose the SAP domain. The segment at 32 to 245 (SRLTAATESN…AERFGVAAKN (214 aa)) is disordered. Residues 37 to 52 (ATESNDENTSNNNATD) are compositionally biased toward low complexity. Acidic residues predominate over residues 58–70 (PPEDDIDWGDMEN). Over residues 109 to 118 (TSQAPETSTG) the composition is skewed to polar residues. Residues 119–130 (AEEHQETTEESK) show a composition bias toward basic and acidic residues. Serine 139 carries the phosphoserine modification. Low complexity predominate over residues 182-196 (SSNNKNHNQSKNPQN).

It belongs to the SAP domain-containing ribonucleoprotein family.

The chain is Protein mlo1 (mlo1) from Schizosaccharomyces pombe (strain 972 / ATCC 24843) (Fission yeast).